A 421-amino-acid polypeptide reads, in one-letter code: Plant UBX domain-containing protein 5 (421 aa).

One can recognise a UBA domain in the interval 4–45 (ETNENLINSFIEITSSSREEANFFLESHTWNLDAAVSTFLDN). Disordered regions lie at residues 46–171 (DAAA…MMVQ) and 292–338 (ENFT…PSRG). Residues 69 to 84 (QSPSQSHSPDYTPSET) are compositionally biased toward polar residues. Positions 85 to 102 (SPSPSRSRSASPSSRAAP) are enriched in low complexity. Residues 231–295 (RIMHTITFWL…DLVRRGENFT (65 aa)) form the SEP domain. The segment covering 312 to 328 (GASGSGSSSAPQASSAP) has biased composition (low complexity). The UBX domain occupies 343–420 (PAAPTTSIQL…GIANAVVIQK (78 aa)).

Interacts with CDC48A (non-hexameric) via its UBX domain.

The protein is Plant UBX domain-containing protein 5 of Arabidopsis thaliana (Mouse-ear cress).